The chain runs to 205 residues: Phosphoenolpyruvate guanylyltransferase (205 aa).

Phosphoenolpyruvate contacts are provided by Thr137, Gly153, and Ser156.

The protein belongs to the CofC family.

It carries out the reaction phosphoenolpyruvate + GTP + H(+) = enolpyruvoyl-2-diphospho-5'-guanosine + diphosphate. It functions in the pathway cofactor biosynthesis; coenzyme F420 biosynthesis. Guanylyltransferase that catalyzes the activation of phosphoenolpyruvate (PEP) as enolpyruvoyl-2-diphospho-5'-guanosine, via the condensation of PEP with GTP. It is involved in the biosynthesis of coenzyme F420, a hydride carrier cofactor. This chain is Phosphoenolpyruvate guanylyltransferase, found in Rubrobacter xylanophilus (strain DSM 9941 / JCM 11954 / NBRC 16129 / PRD-1).